A 101-amino-acid chain; its full sequence is Small ribosomal subunit protein uS14 (101 aa).

Belongs to the universal ribosomal protein uS14 family. In terms of assembly, part of the 30S ribosomal subunit. Contacts proteins S3 and S10.

Its function is as follows. Binds 16S rRNA, required for the assembly of 30S particles and may also be responsible for determining the conformation of the 16S rRNA at the A site. The chain is Small ribosomal subunit protein uS14 from Shewanella piezotolerans (strain WP3 / JCM 13877).